The following is a 248-amino-acid chain: Ubiquinone/menaquinone biosynthesis C-methyltransferase UbiE (248 aa).

Positions 68 and 92 each coordinate S-adenosyl-L-methionine.

The protein belongs to the class I-like SAM-binding methyltransferase superfamily. MenG/UbiE family.

The catalysed reaction is a 2-demethylmenaquinol + S-adenosyl-L-methionine = a menaquinol + S-adenosyl-L-homocysteine + H(+). It carries out the reaction a 2-methoxy-6-(all-trans-polyprenyl)benzene-1,4-diol + S-adenosyl-L-methionine = a 5-methoxy-2-methyl-3-(all-trans-polyprenyl)benzene-1,4-diol + S-adenosyl-L-homocysteine + H(+). The protein operates within quinol/quinone metabolism; menaquinone biosynthesis; menaquinol from 1,4-dihydroxy-2-naphthoate: step 2/2. Its pathway is cofactor biosynthesis; ubiquinone biosynthesis. Its function is as follows. Methyltransferase required for the conversion of demethylmenaquinol (DMKH2) to menaquinol (MKH2) and the conversion of 2-polyprenyl-6-methoxy-1,4-benzoquinol (DDMQH2) to 2-polyprenyl-3-methyl-6-methoxy-1,4-benzoquinol (DMQH2). This chain is Ubiquinone/menaquinone biosynthesis C-methyltransferase UbiE, found in Rickettsia massiliae (strain Mtu5).